The sequence spans 861 residues: FO synthase (861 aa).

Radical SAM core domains lie at 69 to 319 (ITYS…LQAP) and 528 to 763 (VTYI…LLHP). The interval 70 to 401 (TYSKSVFIPL…PRLLPHVRAL (332 aa)) is cofG-like. [4Fe-4S] cluster contacts are provided by C83, C87, C90, C542, C546, and C549. The segment at 505–838 (DGPALDALTR…KPRTTLYGEV (334 aa)) is cofH-like.

In the N-terminal section; belongs to the radical SAM superfamily. CofG family. The protein in the C-terminal section; belongs to the radical SAM superfamily. CofH family. Requires [4Fe-4S] cluster as cofactor.

The enzyme catalyses 5-amino-6-(D-ribitylamino)uracil + L-tyrosine + S-adenosyl-L-methionine = 5-amino-5-(4-hydroxybenzyl)-6-(D-ribitylimino)-5,6-dihydrouracil + 2-iminoacetate + 5'-deoxyadenosine + L-methionine + H(+). It catalyses the reaction 5-amino-5-(4-hydroxybenzyl)-6-(D-ribitylimino)-5,6-dihydrouracil + S-adenosyl-L-methionine = 7,8-didemethyl-8-hydroxy-5-deazariboflavin + 5'-deoxyadenosine + L-methionine + NH4(+) + H(+). The protein operates within cofactor biosynthesis; coenzyme F0 biosynthesis. Catalyzes the radical-mediated synthesis of 7,8-didemethyl-8-hydroxy-5-deazariboflavin (FO) from 5-amino-6-(D-ribitylamino)uracil and L-tyrosine. This is FO synthase (fbiC) from Streptomyces avermitilis (strain ATCC 31267 / DSM 46492 / JCM 5070 / NBRC 14893 / NCIMB 12804 / NRRL 8165 / MA-4680).